Consider the following 258-residue polypeptide: Ribosomal RNA small subunit methyltransferase A (258 aa).

S-adenosyl-L-methionine-binding residues include histidine 13, leucine 15, glycine 40, glutamate 61, aspartate 86, and asparagine 106.

It belongs to the class I-like SAM-binding methyltransferase superfamily. rRNA adenine N(6)-methyltransferase family. RsmA subfamily.

The protein localises to the cytoplasm. It carries out the reaction adenosine(1518)/adenosine(1519) in 16S rRNA + 4 S-adenosyl-L-methionine = N(6)-dimethyladenosine(1518)/N(6)-dimethyladenosine(1519) in 16S rRNA + 4 S-adenosyl-L-homocysteine + 4 H(+). Functionally, specifically dimethylates two adjacent adenosines (A1518 and A1519) in the loop of a conserved hairpin near the 3'-end of 16S rRNA in the 30S particle. May play a critical role in biogenesis of 30S subunits. The protein is Ribosomal RNA small subunit methyltransferase A of Coxiella burnetii (strain Dugway 5J108-111).